A 171-amino-acid polypeptide reads, in one-letter code: Shikimate kinase (171 aa).

Position 14 to 19 (14 to 19) interacts with ATP; sequence GAGKST. Mg(2+) is bound at residue S18. D36, R60, and G82 together coordinate substrate. ATP is bound at residue R120. R139 serves as a coordination point for substrate. Residue Q156 coordinates ATP.

The protein belongs to the shikimate kinase family. As to quaternary structure, monomer. Mg(2+) serves as cofactor.

The protein resides in the cytoplasm. It catalyses the reaction shikimate + ATP = 3-phosphoshikimate + ADP + H(+). The protein operates within metabolic intermediate biosynthesis; chorismate biosynthesis; chorismate from D-erythrose 4-phosphate and phosphoenolpyruvate: step 5/7. In terms of biological role, catalyzes the specific phosphorylation of the 3-hydroxyl group of shikimic acid using ATP as a cosubstrate. This Shewanella sp. (strain MR-4) protein is Shikimate kinase.